The sequence spans 973 residues: MANATIKYTTMDLYGILKSCKCSSDERLTHQSLSGGRFSVTGSKVGEFWRAVADRIESGEPIDISEARQKETPLTLDFDVVDKDCKEPVPDVLVNNIHAAVARWARSSLKPAPEDRDLCGVVLTKPVRQCAKGWKKGFHIQYPKLVLETGVAKNLVVGPALRPICSKVWEAVTGTAKDYLDPLSCTVPWLVYGASKPDEPFAWKIARTLDHAGKTIDFNTAFGDVETPPSWGRPTSDRHREAMVLSIHPAGRSVFFRRYDFTAANPGRVTRLADYSAVMAKLDVARQRKPAWNTDATKAHRLKRVTDLTAMLTADLADDRQTWLNVGFCLWQQTSGSAEGYKVWLSFSKKSDKCDEDECWTIWNNQMRPNSFTEGTLVYLAQKHNPGAYLNWLQVKSTPVNDIGTNVAMAKIMWDYYGHQFVCCGGKTQTWYRFDGLTWVESNQGTDLRSLISAEGGPLRRLLMRQLDAVTAAKARGGRDSGNEDDEEDSATDEDDSNPWDSELRRLDSEVLDTMVKRLRNNLKGIEMTGVKNNVLRECAELFYQPEFGDVIDSDPLLFAFANGIYDFREGCLRDGRPEDKLSRRAPVDFVMFGPIPKARHPDNSPVMRPKRMPGESVQDHARRLAECFEQDDVSASAGTMGKEDVESFSCNPNDFKGPVTKLLAFFASVFPDEGTRRFFLRNAAATFVGGNPDKVVLFWTGTGNNGKTVTQTLFEKMLGCFAVKMSTQTLTGRKPSAGSANPEMARLGGGVRWAVMEEPNSDETINAGTLKSMTGNDSFFARDLYCAGKTTFEIKPMFKLHVICNALPGIKDADQATWNRVRVVPFESTFVTPGTTAPADAKYVFPADTDITRKLDRLTAPLAWYLVYCWACIQNERVKYVPPPKVMEATMAYQKEHDLFRQFVEEMLRKDPDSTLTCDDAYTAFRDWTSANSPHGTVRRPKGQVVKCLEAILGKKTVDGWPGYAVGAEQQE.

Residues 473-502 (AKARGGRDSGNEDDEEDSATDEDDSNPWDS) form a disordered region. Positions 483 to 498 (NEDDEEDSATDEDDSN) are enriched in acidic residues. The SF3 helicase domain maps to 658–840 (GPVTKLLAFF…FVTPGTTAPA (183 aa)). ATP is bound at residue 702 to 709 (GTGNNGKT).

In Frog virus 3 (isolate Goorha) (FV-3), this protein is Putative helicase 022R.